The sequence spans 297 residues: Urease accessory protein UreD (297 aa).

A disordered region spans residues 1-41; sequence MPQAADIATAPQRPSAPGDVVAAGQPPRARGRAHVSSKRRD.

It belongs to the UreD family. UreD, UreF and UreG form a complex that acts as a GTP-hydrolysis-dependent molecular chaperone, activating the urease apoprotein by helping to assemble the nickel containing metallocenter of UreC. The UreE protein probably delivers the nickel.

Its subcellular location is the cytoplasm. Functionally, required for maturation of urease via the functional incorporation of the urease nickel metallocenter. In Ruegeria sp. (strain TM1040) (Silicibacter sp.), this protein is Urease accessory protein UreD.